We begin with the raw amino-acid sequence, 147 residues long: Immunity protein YxxD (147 aa).

In terms of assembly, probably interacts with cognate toxin YxiD but not with other non-cognate toxins. The interaction inhibits the toxic activity of YxiD.

It localises to the cytoplasm. In terms of biological role, immunity component of one of 6 LXG toxin-immunity modules in this strain. They promote kin selection, mediate competition in biofilms, and drive spatial segregation of different strains, indicating that LXG toxins may help avoid warfare between strains in biofilms. Mediates intercellular competition during biofilm formation; disruption of the operon disadvantages the bacteria, but overexpression of the cognate immunity protein restores growth in competition with wild-type. In situ neutralizes the toxic effect of cognate toxin YxiD. Neutralizes the toxic activity of cognate toxin YxiD upon expression in E.coli. Does not have immunity protein activity on other LXG toxins. The protein is Immunity protein YxxD (yxxD) of Bacillus subtilis (strain 168).